The primary structure comprises 795 residues: Nucleolar complex protein 3 homolog (795 aa).

Disordered stretches follow at residues methionine 1–methionine 88, arginine 124–lysine 144, and isoleucine 168–glutamate 190. Basic and acidic residues-rich tracts occupy residues leucine 22–alanine 39 and glutamine 46–serine 58. Residues glutamate 74–methionine 88 are compositionally biased toward acidic residues. Residues glutamate 171–aspartate 181 show a composition bias toward acidic residues. A coiled-coil region spans residues serine 447 to threonine 492.

It belongs to the CBF/MAK21 family.

The protein resides in the nucleus. It localises to the nucleolus. The chain is Nucleolar complex protein 3 homolog (noc3l) from Xenopus laevis (African clawed frog).